The chain runs to 104 residues: Flagellar hook-basal body complex protein FliE (104 aa).

It belongs to the FliE family.

It localises to the bacterial flagellum basal body. The chain is Flagellar hook-basal body complex protein FliE from Salmonella agona (strain SL483).